The following is a 322-amino-acid chain: MKTSRRGRALLAVALNLLALLFATTAFLTTYWCQGTQRVPKPGCGQGGGANCPNSGANATANSTAAPVAASPAGAPYSWEAGDERFQLRRFHTGIWYSCEEELGGPGEKCRSFIDLAPASEKGVLWLSVVSEVLYILLLVVGFSLMCLELLHSSSVIDGLKLNAFAAVFTVLSGLLGMVAHMMYTQVFQVTVSLGPEDWRPHSWDYGWSFCLAWGSFTCCMAASVTTLNSYTKTVIEFRHKRKVFEQGYREEPTFIDPEAIKYFRERIEKGDVSEEEDFRLACRHERYPTRHQPHMGDSWPRSSAHEAAELNRQCWVLGHWV.

Topologically, residues 1-8 (MKTSRRGR) are cytoplasmic. Residues 9-29 (ALLAVALNLLALLFATTAFLT) traverse the membrane as a helical segment. At 30–122 (TYWCQGTQRV…FIDLAPASEK (93 aa)) the chain is on the extracellular side. A helical transmembrane segment spans residues 123–143 (GVLWLSVVSEVLYILLLVVGF). The Cytoplasmic portion of the chain corresponds to 144–163 (SLMCLELLHSSSVIDGLKLN). The helical transmembrane segment at 164–184 (AFAAVFTVLSGLLGMVAHMMY) threads the bilayer. Topologically, residues 185–207 (TQVFQVTVSLGPEDWRPHSWDYG) are extracellular. Residues 208-228 (WSFCLAWGSFTCCMAASVTTL) traverse the membrane as a helical segment. Residues 229–322 (NSYTKTVIEF…RQCWVLGHWV (94 aa)) are Cytoplasmic-facing. Ser274 is modified (phosphoserine).

Belongs to the GSG1 family. Component of the inner core of AMPAR complexes. AMPAR complexes consist of an inner core made of 4 pore-forming GluA/GRIA proteins (GRIA1, GRIA2, GRIA3 and GRIA4) and 4 major auxiliary subunits arranged in a twofold symmetry. One of the two pairs of distinct binding sites is occupied either by CNIH2, CNIH3 or CACNG2, CACNG3. The other harbors CACNG2, CACNG3, CACNG4, CACNG8 or GSG1L. This inner core of AMPAR complexes is complemented by outer core constituents binding directly to the GluA/GRIA proteins at sites distinct from the interaction sites of the inner core constituents. Outer core constituents include at least PRRT1, PRRT2, CKAMP44/SHISA9, FRRS1L and NRN1. The proteins of the inner and outer core serve as a platform for other, more peripherally associated AMPAR constituents. Alone or in combination, these auxiliary subunits control the gating and pharmacology of the AMPAR complexes and profoundly impact their biogenesis and protein processing. In terms of tissue distribution, expressed in the brain (at protein level).

Its subcellular location is the cell membrane. The protein resides in the synapse. As a component of the inner core of AMPAR complexes, modifies AMPA receptor (AMPAR) gating. The chain is Germ cell-specific gene 1-like protein (Gsg1l) from Rattus norvegicus (Rat).